The sequence spans 317 residues: D-alanine--D-alanine ligase (317 aa).

In terms of domain architecture, ATP-grasp spans 103–299; sequence KHIFRSLNID…FNELVKIIIE (197 aa). An ATP-binding site is contributed by 130 to 183; it reads KIDYPYVLKPINEGSSIGVYIIFSHEDYLELKDNSSTIMEKMIVEEYIPGIELH. 3 residues coordinate Mg(2+): D251, E265, and N267.

Belongs to the D-alanine--D-alanine ligase family. Mg(2+) serves as cofactor. The cofactor is Mn(2+).

The protein localises to the cytoplasm. It carries out the reaction 2 D-alanine + ATP = D-alanyl-D-alanine + ADP + phosphate + H(+). Its pathway is cell wall biogenesis; peptidoglycan biosynthesis. Cell wall formation. The protein is D-alanine--D-alanine ligase of Wolbachia sp. subsp. Drosophila simulans (strain wRi).